Here is a 1499-residue protein sequence, read N- to C-terminus: Ring canal kelch homolog (1499 aa).

Residues 56-66 (LDESSQKQLPR) show a composition bias toward polar residues. The disordered stretch occupies residues 56–75 (LDESSQKQLPRSNGKEKTTG). The BTB domain occupies 100-166 (CDVVLVAEGI…VYRAVVEVTE (67 aa)). Kelch repeat units lie at residues 351–396 (VLLV…VLGD), 397–443 (KVYA…VLNN), 444–490 (CIYA…VVNG), 492–539 (LYAV…VLDN), 541–586 (LYAV…AHNG), and 588–634 (LYVV…MIDK). Position 637 (selenocysteine 637) is a non-standard amino acid, selenocysteine. Disordered stretches follow at residues 679–714 (AGQAAGFGNDDENSQAEGLNPEPANSNNSAPNGNNV), 750–786 (LQYAVLNQPQPGPSGLGPGQAHRSLGGERGAVGGGGG), 825–856 (AGYDVPRGRPAPSYYQNQPPTGPSANGRCPNL), 984–1017 (NQSNSSSASSASPYGANGPATTSQPNPTKDSSSV), 1033–1085 (SMNN…GNGG), 1107–1160 (ASTS…PVDV), 1301–1321 (QVGRARSESPSRPPGSDPLRT), and 1334–1499 (ARSP…TASE). Over residues 698–713 (NPEPANSNNSAPNGNN) the composition is skewed to low complexity. A compositionally biased stretch (gly residues) spans 776–786 (GERGAVGGGGG). Over residues 986–1003 (SNSSSASSASPYGANGPA) the composition is skewed to low complexity. Positions 1004–1017 (TTSQPNPTKDSSSV) are enriched in polar residues. A compositionally biased stretch (low complexity) spans 1040-1054 (SSAAHGTASGSAPAA). Residues 1065 to 1085 (ISGGASGGGAGGAGSSGGNGG) show a composition bias toward gly residues. Residues 1107–1119 (ASTSTTLGGKSTG) are compositionally biased toward low complexity. Polar residues predominate over residues 1135–1147 (GPSDPTAGTSAPQ). Residues 1348-1359 (NREKPREVRRIT) show a composition bias toward basic and acidic residues. The span at 1401-1410 (SSASSSSDSD) shows a compositional bias: low complexity. Over residues 1460–1471 (VGSSSNETSDSL) the composition is skewed to polar residues.

Its subcellular location is the cytoplasm. It localises to the cytoskeleton. May play a role in organizing the actin cytoskeleton. The protein is Ring canal kelch homolog of Anopheles stephensi (Indo-Pakistan malaria mosquito).